We begin with the raw amino-acid sequence, 426 residues long: Serine--tRNA ligase (426 aa).

235 to 237 (TAE) is an L-serine binding site. Position 266 to 268 (266 to 268 (RRE)) interacts with ATP. Position 289 (E289) interacts with L-serine. 353–356 (EISS) serves as a coordination point for ATP. L-serine is bound at residue S389.

Belongs to the class-II aminoacyl-tRNA synthetase family. Type-1 seryl-tRNA synthetase subfamily. In terms of assembly, homodimer. The tRNA molecule binds across the dimer.

The protein localises to the cytoplasm. It carries out the reaction tRNA(Ser) + L-serine + ATP = L-seryl-tRNA(Ser) + AMP + diphosphate + H(+). It catalyses the reaction tRNA(Sec) + L-serine + ATP = L-seryl-tRNA(Sec) + AMP + diphosphate + H(+). Its pathway is aminoacyl-tRNA biosynthesis; selenocysteinyl-tRNA(Sec) biosynthesis; L-seryl-tRNA(Sec) from L-serine and tRNA(Sec): step 1/1. In terms of biological role, catalyzes the attachment of serine to tRNA(Ser). Is also able to aminoacylate tRNA(Sec) with serine, to form the misacylated tRNA L-seryl-tRNA(Sec), which will be further converted into selenocysteinyl-tRNA(Sec). The polypeptide is Serine--tRNA ligase (Trichormus variabilis (strain ATCC 29413 / PCC 7937) (Anabaena variabilis)).